The chain runs to 467 residues: ATP-dependent rRNA helicase rrp3 (467 aa).

Residues 1–48 (MPGVKKRKVAREAPAPAPAQESDVESSTPEQTQEPEAQEQEQEEGQSK) are disordered. Residues 48 to 76 (KTFKELGIIEQLCEACETMGYKAPTPIQR) carry the Q motif motif. In terms of domain architecture, Helicase ATP-binding spans 79–250 (IPLALKGRDL…RASLSNPLRV (172 aa)). 92–99 (AETGSGKT) contacts ATP. Positions 198–201 (DEAD) match the DEAD box motif. One can recognise a Helicase C-terminal domain in the interval 262 to 422 (TLLQSYLFIP…EYDCPKDEVM (161 aa)). Residues 439–467 (MKDYNEKKGSRGKKFGGKRSRDEMDQEEG) form a disordered region.

Belongs to the DEAD box helicase family. DDX47/RRP3 subfamily. As to quaternary structure, interacts with the SSU processome.

The protein localises to the nucleus. The catalysed reaction is ATP + H2O = ADP + phosphate + H(+). In terms of biological role, ATP-dependent rRNA helicase required for pre-ribosomal RNA processing. Involved in the maturation of the 35S-pre-rRNA and to its cleavage to mature 18S rRNA. In Aspergillus niger (strain ATCC MYA-4892 / CBS 513.88 / FGSC A1513), this protein is ATP-dependent rRNA helicase rrp3.